The chain runs to 555 residues: DNA-directed primase/polymerase protein (555 aa).

Residues 1–22 (MKRKWEATLKQIEERASHYERK) adopt a coiled-coil conformation. Substrate contacts are provided by residues arginine 76, 114–116 (DLE), and 165–169 (KFSRH). Mn(2+) is bound by residues aspartate 114 and glutamate 116. The interval 210–230 (ETTGHEFTHFSETPSEQGTCF) is disordered. Residues 219 to 230 (FSETPSEQGTCF) show a composition bias toward polar residues. Residue serine 255 is modified to Phosphoserine. Substrate contacts are provided by residues 288 to 291 (RNFR) and lysine 297. Residues cysteine 418, histidine 425, cysteine 445, and cysteine 450 each coordinate Zn(2+). The Zinc knuckle motif motif lies at 418 to 451 (CENIGRAHRSNNIMILVDLKNEVWYQKCHDPVCK). The disordered stretch occupies residues 480 to 503 (TDTTADTETKSPHGPSSSVLSKGA). The interval 480-555 (TDTTADTETK…DELLIEVLQE (76 aa)) is interaction with RPA1. 2 consecutive short sequence motifs (RPA1-binding motif) follow at residues 509-523 (WDNG…EATE) and 543-551 (EIPDELLIE).

Belongs to the eukaryotic-type primase small subunit family. As to quaternary structure, interacts with RPA1; leading to recruitment to chromatin and stimulate DNA primase activity. Interacts with SSBP1. Interacts with POLDIP2; leading to enhance DNA polymerase activity. Mn(2+) serves as cofactor.

It localises to the nucleus. The protein resides in the mitochondrion matrix. It is found in the chromosome. The catalysed reaction is ssDNA + n NTP = ssDNA/pppN(pN)n-1 hybrid + (n-1) diphosphate.. It carries out the reaction DNA(n) + a 2'-deoxyribonucleoside 5'-triphosphate = DNA(n+1) + diphosphate. Functionally, DNA primase and DNA polymerase required to tolerate replication-stalling lesions by bypassing them. Required to facilitate mitochondrial and nuclear replication fork progression by initiating de novo DNA synthesis using dNTPs and acting as an error-prone DNA polymerase able to bypass certain DNA lesions. Shows a high capacity to tolerate DNA damage lesions such as 8oxoG and abasic sites in DNA. Provides different translesion synthesis alternatives when DNA replication is stalled: able to synthesize DNA primers downstream of lesions, such as ultraviolet (UV) lesions, R-loops and G-quadruplexes, to allow DNA replication to continue. Can also realign primers ahead of 'unreadable lesions' such as abasic sites and 6-4 photoproduct (6-4 pyrimidine-pyrimidinone), thereby skipping the lesion. Repriming avoids fork degradation while leading to accumulation of internal ssDNA gaps behind the forks. Also able to incorporate nucleotides opposite DNA lesions such as 8oxoG, like a regular translesion synthesis DNA polymerase. Also required for reinitiating stalled forks after UV damage during nuclear DNA replication. Required for mitochondrial DNA (mtDNA) synthesis and replication, by reinitiating synthesis after UV damage or in the presence of chain-terminating nucleotides. Prevents APOBEC family-mediated DNA mutagenesis by repriming downstream of abasic site to prohibit error-prone translesion synthesis. Has non-overlapping function with POLH. In addition to its role in DNA damage response, also required to maintain efficient nuclear and mitochondrial DNA replication in unperturbed cells. The chain is DNA-directed primase/polymerase protein from Bos taurus (Bovine).